The following is a 623-amino-acid chain: Alpha-1,2-mannosyltransferase Alg9 (623 aa).

The next 8 membrane-spanning stretches (helical) occupy residues Leu152 to Met172, Leu193 to Trp223, Phe229 to Leu254, Phe266 to Ile284, Phe326 to Leu348, Phe360 to Ala378, Ile390 to Phe410, and Phe431 to Tyr452.

This sequence belongs to the glycosyltransferase 22 family.

Its subcellular location is the endoplasmic reticulum membrane. The enzyme catalyses an alpha-D-Man-(1-&gt;2)-alpha-D-Man-(1-&gt;2)-alpha-D-Man-(1-&gt;3)-[alpha-D-Man-(1-&gt;3)-alpha-D-Man-(1-&gt;6)]-beta-D-Man-(1-&gt;4)-beta-D-GlcNAc-(1-&gt;4)-alpha-D-GlcNAc-diphospho-di-trans,poly-cis-dolichol + a di-trans,poly-cis-dolichyl beta-D-mannosyl phosphate = an alpha-D-Man-(1-&gt;2)-alpha-D-Man-(1-&gt;2)-alpha-D-Man-(1-&gt;3)-[alpha-D-Man-(1-&gt;2)-alpha-D-Man-(1-&gt;3)-alpha-D-Man-(1-&gt;6)]-beta-D-Man-(1-&gt;4)-beta-D-GlcNAc-(1-&gt;4)-alpha-D-GlcNAc-diphospho-di-trans,poly-cis-dolichol + a di-trans,poly-cis-dolichyl phosphate + H(+). The catalysed reaction is an alpha-D-Man-(1-&gt;2)-alpha-D-Man-(1-&gt;2)-alpha-D-Man-(1-&gt;3)-[alpha-D-Man-(1-&gt;2)-alpha-D-Man-(1-&gt;3)-[alpha-D-Man-(1-&gt;6)]-alpha-D-Man-(1-&gt;6)]-beta-D-Man-(1-&gt;4)-beta-D-GlcNAc-(1-&gt;4)-alpha-D-GlcNAc-diphospho-di-trans,poly-cis-dolichol + a di-trans,poly-cis-dolichyl beta-D-mannosyl phosphate = an alpha-D-Man-(1-&gt;2)-alpha-D-Man-(1-&gt;2)-alpha-D-Man-(1-&gt;3)-[alpha-D-Man-(1-&gt;2)-alpha-D-Man-(1-&gt;3)-[alpha-D-Man-(1-&gt;2)-alpha-D-Man-(1-&gt;6)]-alpha-D-Man-(1-&gt;6)]-beta-D-Man-(1-&gt;4)-beta-D-GlcNAc-(1-&gt;4)-alpha-D-GlcNAc-diphospho-di-trans,poly-cis-dolichol + a di-trans,poly-cis-dolichyl phosphate + H(+). It functions in the pathway protein modification; protein glycosylation. Its function is as follows. Probable alpha-1,2-mannosyltransferase involved in the N-glycosylation pathway. Probably involved in glycosylation of the TNF receptor grnd, regulating its ligand affinity. Required for normal epithelial growth and architecture. Suppressor of JNK-dependent intestinal stem cell proliferation. This is Alpha-1,2-mannosyltransferase Alg9 from Drosophila melanogaster (Fruit fly).